The chain runs to 171 residues: Calcium channel flower homolog (171 aa).

At 1–31 the chain is on the cytoplasmic side; it reads MSGSVAAGAAAGPVPPAQEEGMTWWYRWLCR. Residues 32–52 traverse the membrane as a helical segment; it reads LAGVLGAVSCAISGLFNCVTI. The Extracellular portion of the chain corresponds to 53 to 56; sequence HPLN. The chain crosses the membrane as a helical span at residues 57–77; it reads IAAGVWMIMNAFILLLCEAPF. Residues 78–101 lie on the Cytoplasmic side of the membrane; sequence CCQFVEFANTVAEKVDRLRSWQKA. The chain crosses the membrane as a helical span at residues 102-122; it reads VFYCGMAIVPIVMSLTLTTLL. The Extracellular segment spans residues 123-124; the sequence is GN. The chain crosses the membrane as a helical span at residues 125–141; sequence AIAFATGVLYGLSALGK. Topologically, residues 142 to 171 are cytoplasmic; that stretch reads KGDAISYARIQQQRQQADEEKLAETFEGEL.

This sequence belongs to the calcium channel flower family. In terms of assembly, interacts with adaptor protein complex 2 (AP-2). Expressed in calyces in the brain (at protein level). Detected in cultured hippocampal neurons (at protein level).

The protein resides in the cell membrane. The protein localises to the cytoplasmic vesicle. It is found in the secretory vesicle. Its subcellular location is the synaptic vesicle. It localises to the golgi apparatus. The protein resides in the vesicle. Functionally, transmembrane protein which mediates synaptic endocytosis and fitness-based cell culling. In response to different stimulus strengths, controls two major modes of synaptic vesicle (SV) retrieval in hippocampal neurons; Clathrin-mediated endocytosis (CME) in response to mild stimulation and activity-dependent bulk endocytosis (ADBE) in response to strong stimulation. In cytotoxic T-lymphoocytes (CTLs) facilitates calcium-dependent endocytosis of cytotoxic granules (CGs) at the immuno synapse. Different isoforms work as fitness fingerprints in 'loser' and 'winner' cells and thereby mediate win/lose decisions as part of the cell competition process. The sequence is that of Calcium channel flower homolog (Cacfd1) from Rattus norvegicus (Rat).